The following is a 354-amino-acid chain: MKKIILVAGGTGGHFFPAVALGEELIKRGYEVHFIIDLRCKKYISQDMKVIFHILDLKRSGNIFLFLPRLSIAVLKAIRLLYNIKPSVIVGFGGYPVISSMFAAVFLRVPIIIHEQNSYLGKVNKFFTSFAKKIAISYKNIKNLPEFAKNKIVVTGGIVRKNIRNLGSVAGPRNDKLFTIFIFGGSQGAKLFSELIPASIQILIQKKPQLKLHIIQQAALDDQVKIKDIYLKLNITYELAEFFDNIALQYKDADLVISRAGASTIEELTYIGLPAIFIPLPSAADNHQYYNAKWLEDTKAGWCLEQNNISAGKLADKILDLISNTKILEDASHNLLKRRKEGHKLLSNLIEEVI.

UDP-N-acetyl-alpha-D-glucosamine contacts are provided by residues 11 to 13 (TGG), Asn-117, Arg-160, Ser-186, and Gln-288.

Belongs to the glycosyltransferase 28 family. MurG subfamily.

The protein localises to the cell inner membrane. It catalyses the reaction di-trans,octa-cis-undecaprenyl diphospho-N-acetyl-alpha-D-muramoyl-L-alanyl-D-glutamyl-meso-2,6-diaminopimeloyl-D-alanyl-D-alanine + UDP-N-acetyl-alpha-D-glucosamine = di-trans,octa-cis-undecaprenyl diphospho-[N-acetyl-alpha-D-glucosaminyl-(1-&gt;4)]-N-acetyl-alpha-D-muramoyl-L-alanyl-D-glutamyl-meso-2,6-diaminopimeloyl-D-alanyl-D-alanine + UDP + H(+). Its pathway is cell wall biogenesis; peptidoglycan biosynthesis. Functionally, cell wall formation. Catalyzes the transfer of a GlcNAc subunit on undecaprenyl-pyrophosphoryl-MurNAc-pentapeptide (lipid intermediate I) to form undecaprenyl-pyrophosphoryl-MurNAc-(pentapeptide)GlcNAc (lipid intermediate II). The protein is UDP-N-acetylglucosamine--N-acetylmuramyl-(pentapeptide) pyrophosphoryl-undecaprenol N-acetylglucosamine transferase of Rickettsia canadensis (strain McKiel).